We begin with the raw amino-acid sequence, 49 residues long: uncharacterized protein (49 aa).

The chain crosses the membrane as a helical span at residues L17–S39.

The protein resides in the membrane. This is an uncharacterized protein from Saccharomyces cerevisiae (strain ATCC 204508 / S288c) (Baker's yeast).